Here is an 828-residue protein sequence, read N- to C-terminus: Periplasmic nitrate reductase (828 aa).

Positions 1–31 (MKLSRRSFMKANAVAAAAAAAGLSVPGVARA) form a signal peptide, tat-type signal. Positions 39 to 95 (IKWDKAPCRFCGTGCGVLVGTQQGRVVACQGDPDAPVNRGLNCIKGYFLPKIMYGKD) constitute a 4Fe-4S Mo/W bis-MGD-type domain. 4 residues coordinate [4Fe-4S] cluster: cysteine 46, cysteine 49, cysteine 53, and cysteine 81. Residues lysine 83, glutamine 150, asparagine 175, cysteine 179, 212–219 (WGANMAEM), 243–247 (STYQH), 262–264 (QSD), methionine 372, glutamine 376, asparagine 482, 508–509 (SD), lysine 531, aspartate 558, and 718–727 (TGRVLEHWHT) each bind Mo-bis(molybdopterin guanine dinucleotide). Phenylalanine 794 contributes to the substrate binding site. Residues asparagine 802 and lysine 819 each contribute to the Mo-bis(molybdopterin guanine dinucleotide) site.

The protein belongs to the prokaryotic molybdopterin-containing oxidoreductase family. NasA/NapA/NarB subfamily. As to quaternary structure, component of the periplasmic nitrate reductase NapAB complex composed of NapA and NapB. [4Fe-4S] cluster is required as a cofactor. Mo-bis(molybdopterin guanine dinucleotide) serves as cofactor. Post-translationally, predicted to be exported by the Tat system. The position of the signal peptide cleavage has not been experimentally proven.

It localises to the periplasm. The catalysed reaction is 2 Fe(II)-[cytochrome] + nitrate + 2 H(+) = 2 Fe(III)-[cytochrome] + nitrite + H2O. Functionally, catalytic subunit of the periplasmic nitrate reductase complex NapAB. Receives electrons from NapB and catalyzes the reduction of nitrate to nitrite. This Escherichia coli O6:K15:H31 (strain 536 / UPEC) protein is Periplasmic nitrate reductase.